The chain runs to 261 residues: Cytochrome c oxidase subunit 3 (261 aa).

The Mitochondrial matrix portion of the chain corresponds to 1 to 15 (MTHQTHAYHMVNPSP). Residues 16-34 (WPLTGALSALLMTSGLTMW) traverse the membrane as a helical segment. The Mitochondrial intermembrane segment spans residues 35–40 (FHFNSM). Residues 41–66 (LLLSLGLLTNTLTMYQWWRDIIREST) form a helical membrane-spanning segment. At 67 to 72 (FQGHHT) the chain is on the mitochondrial matrix side. The chain crosses the membrane as a helical span at residues 73–105 (SVVQKGLRYGMILFIISEVLFFTGFFWAFYHSS). The Mitochondrial intermembrane segment spans residues 106–128 (LAPTPELGGCWPPTGIHPLNPLE). The helical transmembrane segment at 129-152 (VPLLNTSILLASGVSITWAHHSLM) threads the bilayer. The Mitochondrial matrix segment spans residues 153–155 (EGD). A helical membrane pass occupies residues 156–183 (RKHMIQALSITIALGVYFTLLQASEYYE). The Mitochondrial intermembrane segment spans residues 184–190 (APFTISD). Residues 191-223 (GVYGSTFFVATGFHGLHVIIGSTFLAVCLLRQL) traverse the membrane as a helical segment. Residues 224 to 232 (KFHFTSNHH) lie on the Mitochondrial matrix side of the membrane. The helical transmembrane segment at 233-256 (FGFEAAAWYWHFVDVVWLFLYVSI) threads the bilayer. The Mitochondrial intermembrane segment spans residues 257–261 (YWWGS).

The protein belongs to the cytochrome c oxidase subunit 3 family. Component of the cytochrome c oxidase (complex IV, CIV), a multisubunit enzyme composed of 14 subunits. The complex is composed of a catalytic core of 3 subunits MT-CO1, MT-CO2 and MT-CO3, encoded in the mitochondrial DNA, and 11 supernumerary subunits COX4I, COX5A, COX5B, COX6A, COX6B, COX6C, COX7A, COX7B, COX7C, COX8 and NDUFA4, which are encoded in the nuclear genome. The complex exists as a monomer or a dimer and forms supercomplexes (SCs) in the inner mitochondrial membrane with NADH-ubiquinone oxidoreductase (complex I, CI) and ubiquinol-cytochrome c oxidoreductase (cytochrome b-c1 complex, complex III, CIII), resulting in different assemblies (supercomplex SCI(1)III(2)IV(1) and megacomplex MCI(2)III(2)IV(2)).

The protein localises to the mitochondrion inner membrane. The catalysed reaction is 4 Fe(II)-[cytochrome c] + O2 + 8 H(+)(in) = 4 Fe(III)-[cytochrome c] + 2 H2O + 4 H(+)(out). Component of the cytochrome c oxidase, the last enzyme in the mitochondrial electron transport chain which drives oxidative phosphorylation. The respiratory chain contains 3 multisubunit complexes succinate dehydrogenase (complex II, CII), ubiquinol-cytochrome c oxidoreductase (cytochrome b-c1 complex, complex III, CIII) and cytochrome c oxidase (complex IV, CIV), that cooperate to transfer electrons derived from NADH and succinate to molecular oxygen, creating an electrochemical gradient over the inner membrane that drives transmembrane transport and the ATP synthase. Cytochrome c oxidase is the component of the respiratory chain that catalyzes the reduction of oxygen to water. Electrons originating from reduced cytochrome c in the intermembrane space (IMS) are transferred via the dinuclear copper A center (CU(A)) of subunit 2 and heme A of subunit 1 to the active site in subunit 1, a binuclear center (BNC) formed by heme A3 and copper B (CU(B)). The BNC reduces molecular oxygen to 2 water molecules using 4 electrons from cytochrome c in the IMS and 4 protons from the mitochondrial matrix. The chain is Cytochrome c oxidase subunit 3 (MT-CO3) from Sus scrofa (Pig).